The primary structure comprises 68 residues: Large ribosomal subunit protein bL35 (68 aa).

Belongs to the bacterial ribosomal protein bL35 family.

In Fusobacterium nucleatum subsp. nucleatum (strain ATCC 25586 / DSM 15643 / BCRC 10681 / CIP 101130 / JCM 8532 / KCTC 2640 / LMG 13131 / VPI 4355), this protein is Large ribosomal subunit protein bL35.